Here is a 37-residue protein sequence, read N- to C-terminus: U12-myrmicitoxin-Mri1a (37 aa).

Positions 1-23 are cleaved as a signal peptide; it reads MKTIELITIFAMITTLMVTVVAG. The propeptide occupies 24 to 25; the sequence is DP. Val-35 is modified (valine amide).

Expressed by the venom gland.

It is found in the secreted. Functionally, toxin that induces mild paralysis, and reduces survival and reproduction when injected into aphids (A.pisum). May affect various processes in the aphid, including wound healing and hemolymph coagulation. It does not increase the sensitivity of the aphids to the chemical insecticides imidacloprid, methomyl and Spirotetramat. Has no insecticidal activity when injected into blowfly (L.caesar). Does not display any antibacterial or antifungal activity. The sequence is that of U12-myrmicitoxin-Mri1a from Manica rubida (European giant red ant).